Reading from the N-terminus, the 201-residue chain is ATP-dependent Clp protease proteolytic subunit (201 aa).

The active-site Nucleophile is the Ser-98. His-123 is an active-site residue.

Belongs to the peptidase S14 family. Fourteen ClpP subunits assemble into 2 heptameric rings which stack back to back to give a disk-like structure with a central cavity, resembling the structure of eukaryotic proteasomes.

The protein localises to the cytoplasm. The enzyme catalyses Hydrolysis of proteins to small peptides in the presence of ATP and magnesium. alpha-casein is the usual test substrate. In the absence of ATP, only oligopeptides shorter than five residues are hydrolyzed (such as succinyl-Leu-Tyr-|-NHMec, and Leu-Tyr-Leu-|-Tyr-Trp, in which cleavage of the -Tyr-|-Leu- and -Tyr-|-Trp bonds also occurs).. Cleaves peptides in various proteins in a process that requires ATP hydrolysis. Has a chymotrypsin-like activity. Plays a major role in the degradation of misfolded proteins. The polypeptide is ATP-dependent Clp protease proteolytic subunit (Rickettsia typhi (strain ATCC VR-144 / Wilmington)).